The sequence spans 645 residues: 1-deoxy-D-xylulose-5-phosphate synthase (645 aa).

Thiamine diphosphate-binding positions include histidine 87 and 128–130 (GHS). Aspartate 159 contacts Mg(2+). Thiamine diphosphate is bound by residues 160–161 (GA), asparagine 188, phenylalanine 295, and glutamate 384. Residue asparagine 188 coordinates Mg(2+).

It belongs to the transketolase family. DXPS subfamily. In terms of assembly, homodimer. Requires Mg(2+) as cofactor. Thiamine diphosphate is required as a cofactor.

The enzyme catalyses D-glyceraldehyde 3-phosphate + pyruvate + H(+) = 1-deoxy-D-xylulose 5-phosphate + CO2. It participates in metabolic intermediate biosynthesis; 1-deoxy-D-xylulose 5-phosphate biosynthesis; 1-deoxy-D-xylulose 5-phosphate from D-glyceraldehyde 3-phosphate and pyruvate: step 1/1. In terms of biological role, catalyzes the acyloin condensation reaction between C atoms 2 and 3 of pyruvate and glyceraldehyde 3-phosphate to yield 1-deoxy-D-xylulose-5-phosphate (DXP). This Alcanivorax borkumensis (strain ATCC 700651 / DSM 11573 / NCIMB 13689 / SK2) protein is 1-deoxy-D-xylulose-5-phosphate synthase.